Here is a 253-residue protein sequence, read N- to C-terminus: LexA repressor (253 aa).

Residues 26–46 (FDEMKDALNLRSKSGIHRLIS) constitute a DNA-binding region (H-T-H motif). A disordered region spans residues 73–97 (MPAATGKPPLAESGPPPVTAPATDE). Catalysis depends on for autocatalytic cleavage activity residues S174 and K212.

Belongs to the peptidase S24 family. Homodimer.

It carries out the reaction Hydrolysis of Ala-|-Gly bond in repressor LexA.. In terms of biological role, represses a number of genes involved in the response to DNA damage (SOS response), including recA and lexA. In the presence of single-stranded DNA, RecA interacts with LexA causing an autocatalytic cleavage which disrupts the DNA-binding part of LexA, leading to derepression of the SOS regulon and eventually DNA repair. The polypeptide is LexA repressor (Gluconacetobacter diazotrophicus (strain ATCC 49037 / DSM 5601 / CCUG 37298 / CIP 103539 / LMG 7603 / PAl5)).